The primary structure comprises 240 residues: Protein Thf1 (240 aa).

The stretch at 186–222 (KDLDLYRSNLEKVDQLLKVLEDAAEAERKKKEKQAAS) forms a coiled coil. The tract at residues 212 to 240 (ERKKKEKQAASTTPAIEEAPVTTAESSES) is disordered.

This sequence belongs to the THF1 family.

In terms of biological role, may be involved in photosynthetic membrane biogenesis. The sequence is that of Protein Thf1 from Synechocystis sp. (strain ATCC 27184 / PCC 6803 / Kazusa).